Reading from the N-terminus, the 500-residue chain is Cholesterol 24-hydroxylase (500 aa).

A helical membrane pass occupies residues 3–23 (PGLLLLGSAVLLAFGLCCTFV). Cys-437 is a binding site for heme.

The protein belongs to the cytochrome P450 family. The cofactor is heme. In terms of tissue distribution, expressed in high level in the pyramidal cells of the hippocampus, Purkinje cells of the cerebellum, and neuronal cell bodies in layers II/III, V, and VI of the cortex. Expressed in hippocampal and cerebellar interneurons, in retinal ganglion cells, and in a subset of retinal cells localized to the inner nuclear layer (at protein level).

It is found in the endoplasmic reticulum membrane. Its subcellular location is the microsome membrane. It localises to the postsynapse. The protein localises to the presynapse. The protein resides in the cell projection. It is found in the dendrite. It catalyses the reaction cholesterol + reduced [NADPH--hemoprotein reductase] + O2 = (24S)-hydroxycholesterol + oxidized [NADPH--hemoprotein reductase] + H2O + H(+). It carries out the reaction cholestanol + reduced [NADPH--hemoprotein reductase] + O2 = (24S)-hydroxycholestanol + oxidized [NADPH--hemoprotein reductase] + H2O + H(+). The catalysed reaction is 7-dehydrocholesterol + reduced [NADPH--hemoprotein reductase] + O2 = cholesta-5,7-dien-3beta,24S-diol + oxidized [NADPH--hemoprotein reductase] + H2O + H(+). The enzyme catalyses 7-dehydrocholesterol + reduced [NADPH--hemoprotein reductase] + O2 = cholesta-5,7-dien-3beta,25-diol + oxidized [NADPH--hemoprotein reductase] + H2O + H(+). It catalyses the reaction desmosterol + reduced [NADPH--hemoprotein reductase] + O2 = (24Z),26-hydroxydesmosterol + oxidized [NADPH--hemoprotein reductase] + H2O + H(+). It carries out the reaction desmosterol + reduced [NADPH--hemoprotein reductase] + O2 = (24S)-25-epoxycholesterol + oxidized [NADPH--hemoprotein reductase] + H2O + H(+). The catalysed reaction is 4beta-hydroxycholesterol + reduced [NADPH--hemoprotein reductase] + O2 = 4beta,24S-dihydroxycholesterol + oxidized [NADPH--hemoprotein reductase] + H2O + H(+). The enzyme catalyses (24S)-hydroxycholesterol + reduced [NADPH--hemoprotein reductase] + O2 = (24S,25R)-24,26-dihydroxycholesterol + oxidized [NADPH--hemoprotein reductase] + H2O + H(+). It catalyses the reaction (24S)-hydroxycholesterol + reduced [NADPH--hemoprotein reductase] + O2 = 24S,25-dihydroxycholesterol + oxidized [NADPH--hemoprotein reductase] + H2O + H(+). It carries out the reaction 7alpha-hydroxycholesterol + reduced [NADPH--hemoprotein reductase] + O2 = (24S)-7alpha-dihydroxycholesterol + oxidized [NADPH--hemoprotein reductase] + H2O + H(+). The catalysed reaction is progesterone + reduced [NADPH--hemoprotein reductase] + O2 = 17alpha-hydroxyprogesterone + oxidized [NADPH--hemoprotein reductase] + H2O + H(+). The enzyme catalyses testosterone + reduced [NADPH--hemoprotein reductase] + O2 = 16beta,17beta-dihydroxyandrost-4-en-3-one + oxidized [NADPH--hemoprotein reductase] + H2O + H(+). It catalyses the reaction testosterone + reduced [NADPH--hemoprotein reductase] + O2 = 2-hydroxytestosterone + oxidized [NADPH--hemoprotein reductase] + H2O + H(+). It carries out the reaction testosterone + reduced [NADPH--hemoprotein reductase] + O2 = 6beta,17beta-dihydroxyandrost-4-en-3-one + oxidized [NADPH--hemoprotein reductase] + H2O + H(+). It functions in the pathway steroid metabolism; cholesterol degradation. The protein operates within lipid metabolism; C21-steroid hormone metabolism. Functionally, P450 monooxygenase that plays a major role in cholesterol homeostasis in the brain. Primarily catalyzes the hydroxylation (with S stereochemistry) at C-24 of cholesterol side chain, triggering cholesterol diffusion out of neurons and its further degradation. By promoting constant cholesterol elimination in neurons, may activate the mevalonate pathway and coordinate the synthesis of new cholesterol and nonsterol isoprenoids involved in synaptic activity and learning. Further hydroxylates cholesterol derivatives and hormone steroids on both the ring and side chain of these molecules, converting them into active oxysterols involved in lipid signaling and biosynthesis. Acts as an epoxidase converting cholesta-5,24-dien-3beta-ol/desmosterol into (24S),25-epoxycholesterol, an abundant lipid ligand of nuclear NR1H2 and NR1H3 receptors shown to promote neurogenesis in developing brain. May also catalyze the oxidative metabolism of xenobiotics, such as clotrimazole. In Mus musculus (Mouse), this protein is Cholesterol 24-hydroxylase.